The chain runs to 154 residues: Ribosome maturation factor RimP (154 aa).

This sequence belongs to the RimP family.

It localises to the cytoplasm. Required for maturation of 30S ribosomal subunits. The chain is Ribosome maturation factor RimP from Acetivibrio thermocellus (strain ATCC 27405 / DSM 1237 / JCM 9322 / NBRC 103400 / NCIMB 10682 / NRRL B-4536 / VPI 7372) (Clostridium thermocellum).